A 207-amino-acid chain; its full sequence is Octanoyltransferase (207 aa).

The region spanning 29–204 (AETRDELWVV…HLERHLSTSK (176 aa)) is the BPL/LPL catalytic domain. Residues 68-75 (RGGQITYH), 135-137 (SLG), and 148-150 (GLS) each bind substrate. The active-site Acyl-thioester intermediate is Cys-166.

Belongs to the LipB family.

Its subcellular location is the cytoplasm. It catalyses the reaction octanoyl-[ACP] + L-lysyl-[protein] = N(6)-octanoyl-L-lysyl-[protein] + holo-[ACP] + H(+). The protein operates within protein modification; protein lipoylation via endogenous pathway; protein N(6)-(lipoyl)lysine from octanoyl-[acyl-carrier-protein]: step 1/2. Functionally, catalyzes the transfer of endogenously produced octanoic acid from octanoyl-acyl-carrier-protein onto the lipoyl domains of lipoate-dependent enzymes. Lipoyl-ACP can also act as a substrate although octanoyl-ACP is likely to be the physiological substrate. The chain is Octanoyltransferase from Chromobacterium violaceum (strain ATCC 12472 / DSM 30191 / JCM 1249 / CCUG 213 / NBRC 12614 / NCIMB 9131 / NCTC 9757 / MK).